The primary structure comprises 300 residues: N-acetylmuramic acid 6-phosphate etherase (300 aa).

Residues 57–220 form the SIS domain; it reads VAAALRAGGR…STGAMIRIGK (164 aa). The active-site Proton donor is the Glu85. Glu116 is an active-site residue.

The protein belongs to the GCKR-like family. MurNAc-6-P etherase subfamily. As to quaternary structure, homodimer.

The catalysed reaction is N-acetyl-D-muramate 6-phosphate + H2O = N-acetyl-D-glucosamine 6-phosphate + (R)-lactate. It functions in the pathway amino-sugar metabolism; 1,6-anhydro-N-acetylmuramate degradation. It participates in amino-sugar metabolism; N-acetylmuramate degradation. Its pathway is cell wall biogenesis; peptidoglycan recycling. Specifically catalyzes the cleavage of the D-lactyl ether substituent of MurNAc 6-phosphate, producing GlcNAc 6-phosphate and D-lactate. Together with AnmK, is also required for the utilization of anhydro-N-acetylmuramic acid (anhMurNAc) either imported from the medium or derived from its own cell wall murein, and thus plays a role in cell wall recycling. This chain is N-acetylmuramic acid 6-phosphate etherase, found in Klebsiella aerogenes (Enterobacter aerogenes).